The sequence spans 174 residues: Adenylosuccinate synthetase (174 aa).

GTP-binding positions include 13–19 (GDEGKGK) and 41–43 (GHT). Asp-14 acts as the Proton acceptor in catalysis. Positions 14 and 41 each coordinate Mg(2+). IMP is bound by residues 14–17 (DEGK), 39–42 (NAGH), Thr-130, and Arg-144. The Proton donor role is filled by His-42.

Belongs to the adenylosuccinate synthetase family. As to quaternary structure, homodimer. The cofactor is Mg(2+).

Its subcellular location is the cytoplasm. It catalyses the reaction IMP + L-aspartate + GTP = N(6)-(1,2-dicarboxyethyl)-AMP + GDP + phosphate + 2 H(+). It participates in purine metabolism; AMP biosynthesis via de novo pathway; AMP from IMP: step 1/2. In terms of biological role, plays an important role in the de novo pathway of purine nucleotide biosynthesis. Catalyzes the first committed step in the biosynthesis of AMP from IMP. The protein is Adenylosuccinate synthetase of Stutzerimonas stutzeri (Pseudomonas stutzeri).